Here is a 72-residue protein sequence, read N- to C-terminus: MSLGVLAAAIAVGLGALGAGIGNGLIVSRTIEGIAAQPELRPVLQTTMFIGVALVEALPIIGVVFSFIYLGR.

A run of 2 helical transmembrane segments spans residues 1-21 (MSLGVLAAAIAVGLGALGAGI) and 48-68 (MFIGVALVEALPIIGVVFSFI).

This sequence belongs to the ATPase C chain family. F-type ATPases have 2 components, F(1) - the catalytic core - and F(0) - the membrane proton channel. F(1) has five subunits: alpha(3), beta(3), gamma(1), delta(1), epsilon(1). F(0) has three main subunits: a(1), b(2) and c(10-14). The alpha and beta chains form an alternating ring which encloses part of the gamma chain. F(1) is attached to F(0) by a central stalk formed by the gamma and epsilon chains, while a peripheral stalk is formed by the delta and b chains.

It localises to the cell membrane. Its function is as follows. F(1)F(0) ATP synthase produces ATP from ADP in the presence of a proton or sodium gradient. F-type ATPases consist of two structural domains, F(1) containing the extramembraneous catalytic core and F(0) containing the membrane proton channel, linked together by a central stalk and a peripheral stalk. During catalysis, ATP synthesis in the catalytic domain of F(1) is coupled via a rotary mechanism of the central stalk subunits to proton translocation. In terms of biological role, key component of the F(0) channel; it plays a direct role in translocation across the membrane. A homomeric c-ring of between 10-14 subunits forms the central stalk rotor element with the F(1) delta and epsilon subunits. The sequence is that of ATP synthase subunit c from Bacillus caldotenax.